The following is a 308-amino-acid chain: MVWLWLGVGLLGGTGLASLVLAISLFTQRRGRKRSDETSSRGRLPGAASDKRGACACCYRIPKEDVVEPLDLELGLMRVATHPPTPQVPRCTSLYIGEDGLPIDKPEFPPARFEIPDVSTPGTPTSIGRSPSHCSSSSSLSSSASVDTVLHQPPPSWKPPPPPGRKKRPPTPPVRAPTTRLSSHRPPTPIPAPRKNLSTPPTKKTPPPTKPKPVGWTPPVTPRPFPKTPTPQKPPRNPRLPRTVGLENLSKVGLSCPCPRPRTPTEPTTLPIVSVSELAPPPRWSDIEELLEKAVQSVMKDAESMQMT.

Residues 1-22 (MVWLWLGVGLLGGTGLASLVLA) form the signal peptide. Residues 105–274 (KPEFPPARFE…TEPTTLPIVS (170 aa)) form a disordered region. Residues 126–145 (SIGRSPSHCSSSSSLSSSAS) show a composition bias toward low complexity. Composition is skewed to pro residues over residues 152 to 163 (QPPPSWKPPPPP) and 219 to 238 (PVTP…PRNP).

It belongs to the HCMV UL135 family. As to quaternary structure, interacts with host components of the WAVE2 complex ABI1, NAP1 and WAVE2. Also interacts with host ABI2 and TLN1.

It localises to the host cell membrane. The protein localises to the host Golgi apparatus. Functionally, remodels the host actin cytoskeleton in order to impair immune recognition of infected cells. Mechanistically, interacts with members of the host WAVE2 complex and redirects the complex to the plasma membrane. In turn, the efficiency of immune synapse formation is greatly reduced. The chain is Protein UL135 (UL135) from Human cytomegalovirus (strain Merlin) (HHV-5).